The following is a 274-amino-acid chain: Large ribosomal subunit protein uL2cz/uL2cy (274 aa).

The tract at residues 224–274 (NPVDHPHGGGEGRAPIGRKKPTTPWGYPALGRRSRKRNKYSDNLILRRRSK) is disordered.

This sequence belongs to the universal ribosomal protein uL2 family. As to quaternary structure, part of the 50S ribosomal subunit.

The protein localises to the plastid. The protein resides in the chloroplast. The polypeptide is Large ribosomal subunit protein uL2cz/uL2cy (rpl2-A) (Panax ginseng (Korean ginseng)).